A 337-amino-acid chain; its full sequence is Ferredoxin--NADP reductase (337 aa).

FAD-binding residues include Asp-35, Gln-43, Tyr-48, Val-88, Phe-123, Asp-289, and Thr-330.

It belongs to the ferredoxin--NADP reductase type 2 family. As to quaternary structure, homodimer. FAD serves as cofactor.

The enzyme catalyses 2 reduced [2Fe-2S]-[ferredoxin] + NADP(+) + H(+) = 2 oxidized [2Fe-2S]-[ferredoxin] + NADPH. The polypeptide is Ferredoxin--NADP reductase (Paramagnetospirillum magneticum (strain ATCC 700264 / AMB-1) (Magnetospirillum magneticum)).